Reading from the N-terminus, the 110-residue chain is UPF0122 protein gbs1018 (110 aa).

The protein belongs to the UPF0122 family.

Functionally, might take part in the signal recognition particle (SRP) pathway. This is inferred from the conservation of its genetic proximity to ftsY/ffh. May be a regulatory protein. This chain is UPF0122 protein gbs1018, found in Streptococcus agalactiae serotype III (strain NEM316).